A 317-amino-acid chain; its full sequence is CXXC-type zinc finger protein 5 (317 aa).

Over residues 1–49 (MSSLSSGPQDTGGSSSSSSNGSSGSGPKAGVADKSAAVAAAAPASVADD) the composition is skewed to low complexity. A disordered region spans residues 1–96 (MSSLSSGPQD…GSGGGSMMGG (96 aa)). Gly residues predominate over residues 83 to 94 (GGSGGSGGGSMM). The CXXC-type zinc-finger motif lies at 251–292 (GKKKRKRCGMCAPCRRRINCEQCSSCRNRKTGHQICKFRKCE). A Nuclear localization signal motif is present at residues 252–257 (KKKRKR). Residues Cys258, Cys261, Cys264, Cys270, Cys273, Cys276, Cys286, and Cys291 each coordinate Zn(2+).

As to quaternary structure, interacts with DVL1. Interacts with RBPJ.

The protein resides in the nucleus. Its subcellular location is the cytoplasm. In terms of biological role, may indirectly participate in activation of the NF-kappa-B and MAPK pathways. Acts as a mediator of BMP4-mediated modulation of canonical Wnt signaling activity in neural stem cells. Required for DNA damage-induced ATM phosphorylation, p53 activation and cell cycle arrest. Involved in myelopoiesis. Binds to the oxygen responsive element of COX4I2 and represses its transcription under hypoxia conditions (4% oxygen), as well as normoxia conditions (20% oxygen). May repress COX4I2 transactivation induced by CHCHD2 and RBPJ. Binds preferentially to DNA containing cytidine-phosphate-guanosine (CpG) dinucleotides over CpH (H=A, T, and C), hemimethylated-CpG and hemimethylated-hydroxymethyl-CpG. This is CXXC-type zinc finger protein 5 (CXXC5) from Bos taurus (Bovine).